The sequence spans 269 residues: Polyhedrin (269 aa).

Major component of the virus occlusion bodies, which are large proteinaceous structures (polyhedra), that protect the virus from the outside environment for extended periods until they are ingested by insect larvae. This chain is Polyhedrin, found in Euxoa scandens cypovirus (EsCPV).